Here is a 571-residue protein sequence, read N- to C-terminus: Isthmin-2 (571 aa).

An N-terminal signal peptide occupies residues 1 to 26 (MRALRDRAGLLLCVLLLAALLEAALG). Disordered stretches follow at residues 30 to 60 (KKPRLRGPRPGSLTRLAEVSASPDPRPLKEE), 116 to 141 (ANTTLSTPNPDTQASASPDPRPLREE), and 257 to 294 (EKDRAPGEKGEEKEEDEDYPSEDIEGEDQEDKEEDEEE). The span at 116–131 (ANTTLSTPNPDTQASA) shows a compositional bias: polar residues. The N-linked (GlcNAc...) asparagine glycan is linked to Asn117. Positions 257-268 (EKDRAPGEKGEE) are enriched in basic and acidic residues. The span at 269–294 (KEEDEDYPSEDIEGEDQEDKEEDEEE) shows a compositional bias: acidic residues. Asn300 carries N-linked (GlcNAc...) asparagine glycosylation. Residues 327–371 (EPQKEWSPWSPCSGNCSTGKQQRTRPCGYGCTATETRTCDLPSCP) form the TSP type-1 domain. Cystine bridges form between Cys338–Cys365, Cys342–Cys370, and Cys353–Cys357. N-linked (GlcNAc...) asparagine glycosylation occurs at Asn392. Residues 396-559 (MHDQDVDSCE…RACTDNPLEE (164 aa)) form the AMOP domain.

The protein belongs to the isthmin family. Expressed at high levels in the placenta and at moderate levels in the pancreas, kidney, heart, liver, lung, brain and skeletal muscle.

It localises to the secreted. The sequence is that of Isthmin-2 (ISM2) from Homo sapiens (Human).